The sequence spans 487 residues: Glutamate--tRNA ligase 2 (487 aa).

Residues 31–41 (PSPTGHLHVGG) carry the 'HIGH' region motif. The short motif at 254 to 258 (PLSKR) is the 'KMSKS' region element. Lys257 is a binding site for ATP.

It belongs to the class-I aminoacyl-tRNA synthetase family. Glutamate--tRNA ligase type 1 subfamily. In terms of assembly, monomer.

It is found in the cytoplasm. It carries out the reaction tRNA(Glu) + L-glutamate + ATP = L-glutamyl-tRNA(Glu) + AMP + diphosphate. In terms of biological role, catalyzes the attachment of glutamate to tRNA(Glu) in a two-step reaction: glutamate is first activated by ATP to form Glu-AMP and then transferred to the acceptor end of tRNA(Glu). This is Glutamate--tRNA ligase 2 from Thermotoga maritima (strain ATCC 43589 / DSM 3109 / JCM 10099 / NBRC 100826 / MSB8).